The primary structure comprises 225 residues: Ribosomal RNA small subunit methyltransferase G (225 aa).

S-adenosyl-L-methionine contacts are provided by residues glycine 96, phenylalanine 101, 146 to 147, and arginine 160; that span reads AE.

It belongs to the methyltransferase superfamily. RNA methyltransferase RsmG family.

It is found in the cytoplasm. Specifically methylates the N7 position of a guanine in 16S rRNA. The chain is Ribosomal RNA small subunit methyltransferase G from Mycoplasma mobile (strain ATCC 43663 / 163K / NCTC 11711) (Mesomycoplasma mobile).